We begin with the raw amino-acid sequence, 255 residues long: RNA polymerase sigma-F factor (255 aa).

The Polymerase core binding motif lies at 61 to 74 (DLFQIGCIGLLKSV). Residues 221 to 240 (QSEVAERLGISQVQVSRLEK) constitute a DNA-binding region (H-T-H motif).

It belongs to the sigma-70 factor family. As to quaternary structure, interacts transiently with the RNAP core.

With respect to regulation, interaction with SpoIIAB inhibits sigma-F activity throughout the cell before the formation of the asymmetric septum; after septation the interaction is confined to the mother cell, and sigma-F activity is released in the prespore. Fin, a second, forespore-specific anti-sigma factor is induced in 2 successive waves by sigma-F and sigma-G, by antagonizing sigma-F it allows the switch to sigma-G factor and progression to the late sporulation development stages. Functionally, sigma factors are initiation factors that promote the attachment of RNA polymerase to specific initiation sites and are then released. This sigma factor is responsible for the expression of sporulation specific genes. Interaction with SpoIIAB inhibits sigma-F activity throughout the cell before the formation of the asymmetric septum; after septation the interaction is confined to the mother cell, and sigma F activity is released in the prespore. Responsible for expression of csfB (the anti-sigma-G factor Gin). Associates with the RNAP core only in stationary phase cells. This chain is RNA polymerase sigma-F factor (sigF), found in Bacillus subtilis (strain 168).